The sequence spans 302 residues: MYWFKNAMIYRLTKKLDWSEEALQQNLTQNAYHPCGQSDMSRFGWSTPLRGAELLHFSVGKQILLVAHKEEKIIPSHVVKRELDNRIDELEQKENRKLKKTEKQALKDDVVSVLLPRAFSKNQQTAIWINTETNLIYIDAASSKRAEDVLALLRKSLGSLPVVPLAFANEPALMMTNWIARNEMPQYLTALEEAELKAADDKGIIRCKNQPLDSEEILSHLEKGKFITKLALDWETHLSFVLNDDGTLKRLKFADNIREKNDDILKEDYAQRFDADFILMTGELTALTENLLDDLGGEKTRL.

This sequence belongs to the RdgC family.

The protein resides in the cytoplasm. Its subcellular location is the nucleoid. Its function is as follows. May be involved in recombination. The sequence is that of Recombination-associated protein RdgC from Actinobacillus succinogenes (strain ATCC 55618 / DSM 22257 / CCUG 43843 / 130Z).